We begin with the raw amino-acid sequence, 629 residues long: tRNA uridine 5-carboxymethylaminomethyl modification enzyme MnmG (629 aa).

FAD-binding positions include 15-20 (GAGHAG), valine 127, and serine 182. The tract at residues 203–226 (TPPRVKSSTIDYSKTEEQPGDDHP) is disordered. Residues 215-226 (SKTEEQPGDDHP) show a composition bias toward basic and acidic residues. 274–288 (GARYCPSIEDKIVRF) provides a ligand contact to NAD(+). Glutamine 371 lines the FAD pocket.

This sequence belongs to the MnmG family. As to quaternary structure, homodimer. Heterotetramer of two MnmE and two MnmG subunits. It depends on FAD as a cofactor.

It is found in the cytoplasm. In terms of biological role, NAD-binding protein involved in the addition of a carboxymethylaminomethyl (cmnm) group at the wobble position (U34) of certain tRNAs, forming tRNA-cmnm(5)s(2)U34. This chain is tRNA uridine 5-carboxymethylaminomethyl modification enzyme MnmG, found in Listeria monocytogenes serovar 1/2a (strain ATCC BAA-679 / EGD-e).